The sequence spans 169 residues: Protein-export protein SecB (169 aa).

The protein belongs to the SecB family. In terms of assembly, homotetramer, a dimer of dimers. One homotetramer interacts with 1 SecA dimer.

It localises to the cytoplasm. Its function is as follows. One of the proteins required for the normal export of preproteins out of the cell cytoplasm. It is a molecular chaperone that binds to a subset of precursor proteins, maintaining them in a translocation-competent state. It also specifically binds to its receptor SecA. The polypeptide is Protein-export protein SecB (Mannheimia succiniciproducens (strain KCTC 0769BP / MBEL55E)).